The chain runs to 348 residues: NADH-ubiquinone oxidoreductase chain 2 (348 aa).

Helical transmembrane passes span 1–21, 60–80, 96–116, 149–169, 177–194, 198–220, 238–258, 273–293, and 328–348; these read MSPYITASLLFGLLLGPTITA, FLTQATAAAMLLFASTTNAWL, TLIILALALKIGLAPLHTWLP, NPTLLVILGVLSTLIGGWGGL, ILAYSSIAHLGWMILILQ, TLTLLTLMLYLIMTSSAFLTFIL, ILTSLLPLVLLSLGGLPPLTG, DLAPTATLAALSALLSLYFYL, and MAASSILLLPMTPGILTLFNI.

It belongs to the complex I subunit 2 family.

Its subcellular location is the mitochondrion inner membrane. It catalyses the reaction a ubiquinone + NADH + 5 H(+)(in) = a ubiquinol + NAD(+) + 4 H(+)(out). In terms of biological role, core subunit of the mitochondrial membrane respiratory chain NADH dehydrogenase (Complex I) that is believed to belong to the minimal assembly required for catalysis. Complex I functions in the transfer of electrons from NADH to the respiratory chain. The immediate electron acceptor for the enzyme is believed to be ubiquinone. In Tetraodon nigroviridis (Spotted green pufferfish), this protein is NADH-ubiquinone oxidoreductase chain 2 (MT-ND2).